Here is a 289-residue protein sequence, read N- to C-terminus: Phosphatidylserine decarboxylase proenzyme (289 aa).

Residues D88, H145, and S251 each act as charge relay system; for autoendoproteolytic cleavage activity in the active site. Catalysis depends on S251, which acts as the Schiff-base intermediate with substrate; via pyruvic acid; for decarboxylase activity. S251 bears the Pyruvic acid (Ser); by autocatalysis mark.

It belongs to the phosphatidylserine decarboxylase family. PSD-B subfamily. Prokaryotic type I sub-subfamily. As to quaternary structure, heterodimer of a large membrane-associated beta subunit and a small pyruvoyl-containing alpha subunit. Pyruvate serves as cofactor. In terms of processing, is synthesized initially as an inactive proenzyme. Formation of the active enzyme involves a self-maturation process in which the active site pyruvoyl group is generated from an internal serine residue via an autocatalytic post-translational modification. Two non-identical subunits are generated from the proenzyme in this reaction, and the pyruvate is formed at the N-terminus of the alpha chain, which is derived from the carboxyl end of the proenzyme. The autoendoproteolytic cleavage occurs by a canonical serine protease mechanism, in which the side chain hydroxyl group of the serine supplies its oxygen atom to form the C-terminus of the beta chain, while the remainder of the serine residue undergoes an oxidative deamination to produce ammonia and the pyruvoyl prosthetic group on the alpha chain. During this reaction, the Ser that is part of the protease active site of the proenzyme becomes the pyruvoyl prosthetic group, which constitutes an essential element of the active site of the mature decarboxylase.

The protein localises to the cell membrane. The enzyme catalyses a 1,2-diacyl-sn-glycero-3-phospho-L-serine + H(+) = a 1,2-diacyl-sn-glycero-3-phosphoethanolamine + CO2. It participates in phospholipid metabolism; phosphatidylethanolamine biosynthesis; phosphatidylethanolamine from CDP-diacylglycerol: step 2/2. Its function is as follows. Catalyzes the formation of phosphatidylethanolamine (PtdEtn) from phosphatidylserine (PtdSer). This Polaromonas naphthalenivorans (strain CJ2) protein is Phosphatidylserine decarboxylase proenzyme.